Consider the following 260-residue polypeptide: Purine nucleoside phosphorylase XF_0940 (260 aa).

His-79, Cys-120, and His-137 together coordinate Zn(2+).

This sequence belongs to the purine nucleoside phosphorylase YfiH/LACC1 family. Homodimer. Requires Cu(2+) as cofactor. Zn(2+) serves as cofactor.

The enzyme catalyses adenosine + phosphate = alpha-D-ribose 1-phosphate + adenine. It carries out the reaction S-methyl-5'-thioadenosine + phosphate = 5-(methylsulfanyl)-alpha-D-ribose 1-phosphate + adenine. The catalysed reaction is inosine + phosphate = alpha-D-ribose 1-phosphate + hypoxanthine. It catalyses the reaction adenosine + H2O + H(+) = inosine + NH4(+). Its function is as follows. Purine nucleoside enzyme that catalyzes the phosphorolysis of adenosine and inosine nucleosides, yielding D-ribose 1-phosphate and the respective free bases, adenine and hypoxanthine. Also catalyzes the phosphorolysis of S-methyl-5'-thioadenosine into adenine and S-methyl-5-thio-alpha-D-ribose 1-phosphate. Also has adenosine deaminase activity. This Xylella fastidiosa (strain 9a5c) protein is Purine nucleoside phosphorylase XF_0940.